A 264-amino-acid chain; its full sequence is 3'-5' ssDNA/RNA exonuclease TatD (264 aa).

A divalent metal cation-binding residues include E92, H128, and H153.

It belongs to the metallo-dependent hydrolases superfamily. TatD-type hydrolase family. TatD subfamily. Monomer. The cofactor is Mg(2+).

Its subcellular location is the cytoplasm. 3'-5' exonuclease that prefers single-stranded DNA and RNA. May play a role in the H(2)O(2)-induced DNA damage repair. In Musicola paradisiaca (strain Ech703) (Dickeya paradisiaca), this protein is 3'-5' ssDNA/RNA exonuclease TatD.